A 189-amino-acid polypeptide reads, in one-letter code: Glutathione-dependent formaldehyde-activating enzyme (189 aa).

Positions 20-167 (FAGGTLVCKC…LKELGLEPYD (148 aa)) constitute a CENP-V/GFA domain. Zn(2+) contacts are provided by C27, C29, C48, C50, C53, C95, and C98.

Belongs to the Gfa family. Requires Zn(2+) as cofactor.

The enzyme catalyses S-(hydroxymethyl)glutathione = glutathione + formaldehyde. Its pathway is one-carbon metabolism; formaldehyde degradation; formate from formaldehyde (glutathione route): step 1/3. Functionally, catalyzes the condensation of formaldehyde and glutathione to S-hydroxymethylglutathione. This Rhodopseudomonas palustris (strain BisA53) protein is Glutathione-dependent formaldehyde-activating enzyme.